The following is a 175-amino-acid chain: Glycine-rich RNA-binding protein 1 (175 aa).

Residues 3–81 (AKVYVGNLSW…RRIRVNMANS (79 aa)) form the RRM domain. Residues 114–175 (GQPGGFQQPG…GYGGYNGQSQ (62 aa)) form a disordered region. Residues 122–131 (PGGFQQQGGY) show a composition bias toward low complexity. Residues 132–141 (PQQGGYGGYQ) show a composition bias toward gly residues. Over residues 142–162 (QPGFQPQQGGYGAPQQGYGAP) the composition is skewed to low complexity. Gly residues predominate over residues 163–175 (QQGGYGGYNGQSQ).

It belongs to the glycine-rich RNA-binding protein family. In terms of assembly, part of large ribonucleoprotein complexes (mRNPs) containing RNA-binding proteins RRM4 and PAB1, endosome-binding protein UPA1, core scaffold protein UPA2 and associated factor GRP1.

The protein resides in the endosome. Its function is as follows. Component of endosomal mRNA transport that regulates polarity of the infectious hyphae by transporting a broad spectrum of cargo mRNAs from the nucleus to cell poles. The chain is Glycine-rich RNA-binding protein 1 from Mycosarcoma maydis (Corn smut fungus).